Here is a 1567-residue protein sequence, read N- to C-terminus: ABC multidrug transporter MDR1 (1567 aa).

Positions 1 to 11 (MASQPPQPPSG) are enriched in pro residues. The segment at 1 to 37 (MASQPPQPPSGQPDTQYEEYQSEVITETTNRPTPAAD) is disordered. Over residues 22-32 (SEVITETTNRP) the composition is skewed to polar residues. 3 N-linked (GlcNAc...) asparagine glycosylation sites follow: N149, N157, and N356. The region spanning 167-432 (VQYQDTFLSP…FEEMGWYCPP (266 aa)) is the ABC transporter 1 domain. 6 helical membrane-spanning segments follow: residues 543 to 563 (STIA…SLFF), 571 to 591 (GFFA…LMSI), 636 to 656 (IPIK…LGGL), 661 to 681 (AKFF…SAIF), 691 to 711 (IPQA…YTGF), and 798 to 818 (LGIL…VSEL). N-linked (GlcNAc...) asparagine glycosylation is found at N819, N895, and N912. Residues 891–1134 (FTWRNVTYDI…LLNYFETHGA (244 aa)) form the ABC transporter 2 domain. 927–934 (GVSGAGKT) contributes to the ATP binding site. Positions 1172–1202 (ESRHVQQELDRIQSETSKRNEGHGQSAEKEP) are disordered. A helical transmembrane segment spans residues 1231–1251 (IWGKLLLGLASALFIGFSFFL). N-linked (GlcNAc...) asparagine glycosylation occurs at N1253. 5 helical membrane-spanning segments follow: residues 1257–1277 (AGLQ…SSLV), 1305–1325 (VFLL…GIIA), 1345–1365 (ILLL…QMII), 1372–1392 (ETAG…NGVL), and 1498–1518 (GIGW…YYLI).

Belongs to the ABC transporter superfamily. ABCG family. PDR (TC 3.A.1.205) subfamily.

The protein resides in the cell membrane. It catalyses the reaction voriconazole(in) + ATP + H2O = voriconazole(out) + ADP + phosphate + H(+). It carries out the reaction fluconazole(in) + ATP + H2O = fluconazole(out) + ADP + phosphate + H(+). The enzyme catalyses (R)-miconazole(in) + ATP + H2O = (R)-miconazole(out) + ADP + phosphate + H(+). The catalysed reaction is (S)-miconazole(in) + ATP + H2O = (S)-miconazole(out) + ADP + phosphate + H(+). Functionally, pleiotropic ABC efflux transporter that may be involved in the modulation susceptibility to a wide range of unrelated cytotoxic compounds, including ethidium bromide, ketoconazole, cycloheximide, fluconazole, griseofulvin, imazalil and itraconazole. In Trichophyton interdigitale (strain MR816), this protein is ABC multidrug transporter MDR1.